The primary structure comprises 149 residues: Large ribosomal subunit protein bL9 (149 aa).

Belongs to the bacterial ribosomal protein bL9 family.

Binds to the 23S rRNA. In Laribacter hongkongensis (strain HLHK9), this protein is Large ribosomal subunit protein bL9.